Here is a 219-residue protein sequence, read N- to C-terminus: tRNA (guanine-N(7)-)-methyltransferase (219 aa).

Positions 43, 68, 101, and 124 each coordinate S-adenosyl-L-methionine. Residues Lys-128 and Asp-160 each contribute to the substrate site.

It belongs to the class I-like SAM-binding methyltransferase superfamily. TrmB family.

The enzyme catalyses guanosine(46) in tRNA + S-adenosyl-L-methionine = N(7)-methylguanosine(46) in tRNA + S-adenosyl-L-homocysteine. It functions in the pathway tRNA modification; N(7)-methylguanine-tRNA biosynthesis. In terms of biological role, catalyzes the formation of N(7)-methylguanine at position 46 (m7G46) in tRNA. In Clostridium botulinum (strain Eklund 17B / Type B), this protein is tRNA (guanine-N(7)-)-methyltransferase.